The sequence spans 457 residues: Cysteine--tRNA ligase (457 aa).

Position 28 (C28) interacts with Zn(2+). The 'HIGH' region signature appears at 30-40; sequence ITVYDLCHIGH. Zn(2+) is bound by residues C209, H234, and E238. The 'KMSKS' region motif lies at 266-270; it reads KMSKS. K269 is an ATP binding site.

This sequence belongs to the class-I aminoacyl-tRNA synthetase family. In terms of assembly, monomer. The cofactor is Zn(2+).

The protein localises to the cytoplasm. The enzyme catalyses tRNA(Cys) + L-cysteine + ATP = L-cysteinyl-tRNA(Cys) + AMP + diphosphate. The polypeptide is Cysteine--tRNA ligase (Sodalis glossinidius (strain morsitans)).